Reading from the N-terminus, the 312-residue chain is MNITFLGTSSGVPSLTRNVSSLALKLSQSAEVWLFDCGEGTQHQIMKSNIKSSQIKKIFITHMHGDHIYGLPGLLATLGLSGNSEGIEIYGPSELRSFINSALKSSFCKLSFPLHFVEVENFALKNKILFENNKIKVNCACLKHKIPAYGYRVSEKDKPGVFDIKKAESLKIAPGPIYSELQQGKKVVLPDGRTFDGKEFCGPPREGESFVYCTDTVFSESAVSLSKNADLLVHESTFSQTDERMAYEKLHSTTIMAAKTALLSNTKKLIITHLSPRYTNKNSITPGDLLKEAQKVFPNTHLAKDFLTAEIK.

Zn(2+) is bound by residues H62, H64, D66, H67, H144, D215, and H273. The active-site Proton acceptor is D66.

The protein belongs to the RNase Z family. In terms of assembly, homodimer. Requires Zn(2+) as cofactor.

The enzyme catalyses Endonucleolytic cleavage of RNA, removing extra 3' nucleotides from tRNA precursor, generating 3' termini of tRNAs. A 3'-hydroxy group is left at the tRNA terminus and a 5'-phosphoryl group is left at the trailer molecule.. Functionally, zinc phosphodiesterase, which displays some tRNA 3'-processing endonuclease activity. Probably involved in tRNA maturation, by removing a 3'-trailer from precursor tRNA. This is Ribonuclease Z from Prochlorococcus marinus (strain AS9601).